Reading from the N-terminus, the 317-residue chain is Acetyl-coenzyme A carboxylase carboxyl transferase subunit alpha (317 aa).

The CoA carboxyltransferase C-terminal domain occupies 40–293; sequence LEKRSADALK…GDIIAASLRS (254 aa).

It belongs to the AccA family. As to quaternary structure, acetyl-CoA carboxylase is a heterohexamer composed of biotin carboxyl carrier protein (AccB), biotin carboxylase (AccC) and two subunits each of ACCase subunit alpha (AccA) and ACCase subunit beta (AccD).

It localises to the cytoplasm. The catalysed reaction is N(6)-carboxybiotinyl-L-lysyl-[protein] + acetyl-CoA = N(6)-biotinyl-L-lysyl-[protein] + malonyl-CoA. Its pathway is lipid metabolism; malonyl-CoA biosynthesis; malonyl-CoA from acetyl-CoA: step 1/1. Component of the acetyl coenzyme A carboxylase (ACC) complex. First, biotin carboxylase catalyzes the carboxylation of biotin on its carrier protein (BCCP) and then the CO(2) group is transferred by the carboxyltransferase to acetyl-CoA to form malonyl-CoA. This Brucella abortus (strain S19) protein is Acetyl-coenzyme A carboxylase carboxyl transferase subunit alpha.